The chain runs to 80 residues: Cell division activator CedA (80 aa).

This sequence belongs to the CedA family.

Its function is as follows. Activates the cell division inhibited by chromosomal DNA over-replication. This is Cell division activator CedA from Salmonella choleraesuis (strain SC-B67).